The primary structure comprises 176 residues: Isopentenyl-diphosphate Delta-isomerase (176 aa).

Residues H22 and H28 each coordinate Mn(2+). A Nudix hydrolase domain is found at 26-160 (LRHKAVSVFV…PDRYTPWLRI (135 aa)). The active site involves C62. Residue H64 participates in Mn(2+) binding. E82 contributes to the Mg(2+) binding site. Mn(2+) contacts are provided by E108 and E110. E110 is a catalytic residue.

The protein belongs to the IPP isomerase type 1 family. The cofactor is Mg(2+). Requires Mn(2+) as cofactor.

The protein resides in the cytoplasm. The enzyme catalyses isopentenyl diphosphate = dimethylallyl diphosphate. The protein operates within isoprenoid biosynthesis; dimethylallyl diphosphate biosynthesis; dimethylallyl diphosphate from isopentenyl diphosphate: step 1/1. It participates in porphyrin-containing compound metabolism; chlorophyll biosynthesis. Catalyzes the 1,3-allylic rearrangement of the homoallylic substrate isopentenyl (IPP) to its highly electrophilic allylic isomer, dimethylallyl diphosphate (DMAPP). This chain is Isopentenyl-diphosphate Delta-isomerase, found in Roseobacter denitrificans (strain ATCC 33942 / OCh 114) (Erythrobacter sp. (strain OCh 114)).